Reading from the N-terminus, the 425-residue chain is MIDIKLIRQNPDFVKEALRKRGEDPAIIDEILKIDADWRATITKTNELRSRRNEISKNVARLKKEGKNAEAEALIEEGKRLGEEIKALEEKEKELQKKLNDLLLMIPNIPHESVPVGEDESQNVEVRRWGEPREFDFTPLAHWDLGPAWGLMDFSRASKLSGSRFTVMYGKLARLERALINFMLDVHTKEHGYTEVWVPHLVKRETITITGQLPKFEEELYLAERDDLFLIPTAEVPLAALHSGEILEEKELPKKYVSYTPCYRREAGSYGKDVRGMIRQHQFDKVELVWVTTPERSFEDLEELVKDAETILRKLELPYRVVSLCTGDLGFTSAKTYDIEVWLPSYNAYKEISSCSNVTDFQARRGNMRYRRRSDGKLEYVHTLNGSGIAVGRALVAILENYQQPDGSVRVPEVLVPYTGFEVIP.

233 to 235 provides a ligand contact to L-serine; it reads TAE. Residue 264-266 participates in ATP binding; the sequence is RRE. Residue glutamate 287 participates in L-serine binding. 351 to 354 contacts ATP; it reads EISS. An L-serine-binding site is contributed by serine 387.

Belongs to the class-II aminoacyl-tRNA synthetase family. Type-1 seryl-tRNA synthetase subfamily. As to quaternary structure, homodimer. The tRNA molecule binds across the dimer.

The protein resides in the cytoplasm. It catalyses the reaction tRNA(Ser) + L-serine + ATP = L-seryl-tRNA(Ser) + AMP + diphosphate + H(+). It carries out the reaction tRNA(Sec) + L-serine + ATP = L-seryl-tRNA(Sec) + AMP + diphosphate + H(+). It participates in aminoacyl-tRNA biosynthesis; selenocysteinyl-tRNA(Sec) biosynthesis; L-seryl-tRNA(Sec) from L-serine and tRNA(Sec): step 1/1. Catalyzes the attachment of serine to tRNA(Ser). Is also able to aminoacylate tRNA(Sec) with serine, to form the misacylated tRNA L-seryl-tRNA(Sec), which will be further converted into selenocysteinyl-tRNA(Sec). The protein is Serine--tRNA ligase of Thermotoga maritima (strain ATCC 43589 / DSM 3109 / JCM 10099 / NBRC 100826 / MSB8).